A 669-amino-acid chain; its full sequence is Zeaxanthin epoxidase, chloroplastic (669 aa).

The transit peptide at 1 to 49 directs the protein to the chloroplast; it reads MYSTVFYTSVHPSTSVLSRKQLPLLISKDFSAELYHSLPCRSLENGHIN. FAD contacts are provided by residues 87–115 and 365–378; these read KVLVAGGGIGGLVFALAAKKRGFDVLVFE and TFSWGRGRVTLLGD. An FHA domain is found at 553 to 617; that stretch reads IVLSRDEDVP…HGTWVTDNEG (65 aa).

FAD is required as a cofactor.

It localises to the plastid. It is found in the chloroplast. It catalyses the reaction all-trans-zeaxanthin + 4 reduced [2Fe-2S]-[ferredoxin] + 2 O2 + 4 H(+) = all-trans-violaxanthin + 4 oxidized [2Fe-2S]-[ferredoxin] + 2 H2O. It participates in plant hormone biosynthesis; abscisate biosynthesis. Its function is as follows. Converts zeaxanthin into antheraxanthin and subsequently violaxanthin. Involved in the epoxidation of zeaxanthin. Plays an important role in resistance to stresses, seed development and dormancy. This chain is Zeaxanthin epoxidase, chloroplastic, found in Solanum lycopersicum (Tomato).